Here is a 119-residue protein sequence, read N- to C-terminus: MANSKRQLFIKRRLRVRNKLRKVNAGRVRLSVHRSNKNISVQLIDDVAGKTLASASTLEKDLGVVGKNNIEAAAKVGAAIAERAKKAGVSEAYFDRGGFLFHGKVKAVAEAAREGGLKI.

Belongs to the universal ribosomal protein uL18 family. As to quaternary structure, part of the 50S ribosomal subunit; part of the 5S rRNA/L5/L18/L25 subcomplex. Contacts the 5S and 23S rRNAs.

This is one of the proteins that bind and probably mediate the attachment of the 5S RNA into the large ribosomal subunit, where it forms part of the central protuberance. The sequence is that of Large ribosomal subunit protein uL18 from Roseobacter denitrificans (strain ATCC 33942 / OCh 114) (Erythrobacter sp. (strain OCh 114)).